We begin with the raw amino-acid sequence, 403 residues long: Argininosuccinate synthase (403 aa).

Residues 12-20 and alanine 39 each bind ATP; that span reads AYSGGLDTS. Tyrosine 91 serves as a coordination point for L-citrulline. Glycine 121 lines the ATP pocket. L-aspartate is bound by residues threonine 123, asparagine 127, and aspartate 128. Position 127 (asparagine 127) interacts with L-citrulline. Residues arginine 131, serine 180, serine 189, glutamate 265, and tyrosine 277 each contribute to the L-citrulline site.

The protein belongs to the argininosuccinate synthase family. Type 1 subfamily. In terms of assembly, homotetramer.

It localises to the cytoplasm. The enzyme catalyses L-citrulline + L-aspartate + ATP = 2-(N(omega)-L-arginino)succinate + AMP + diphosphate + H(+). It functions in the pathway amino-acid biosynthesis; L-arginine biosynthesis; L-arginine from L-ornithine and carbamoyl phosphate: step 2/3. The sequence is that of Argininosuccinate synthase from Buchnera aphidicola subsp. Acyrthosiphon pisum (strain 5A).